The primary structure comprises 210 residues: RNA binding protein, mRNA processing factor 2 (210 aa).

The segment covering 1-10 has biased composition (basic and acidic residues); it reads MSNLKPDVEH. The segment at 1–25 is disordered; that stretch reads MSNLKPDVEHCTGAGTGTGTGPSGP. Position 2 is an N-acetylserine (S2). In terms of domain architecture, RRM spans 31–108; it reads RTLFVSGLPV…QTLRLEFAKA (78 aa). Positions 41 to 51 are important for homodimerization; that stretch reads DIKPRELYLLF.

Homodimer. Interacts with EEF2.

Its subcellular location is the cytoplasm. The protein localises to the nucleus. It localises to the stress granule. Its function is as follows. RNA-binding protein involved in the regulation of smooth muscle cell differentiation and proliferation in the gastrointestinal system. Binds NOG mRNA, the major inhibitor of the bone morphogenetic protein (BMP) pathway. Mediates an increase of NOG mRNA levels, thereby contributing to the negative regulation of BMP signaling pathway and promoting reversible dedifferentiation and proliferation of smooth muscle cells. Acts as a pre-mRNA alternative splicing regulator. Mediates ACTN1 and FLNB alternative splicing. Likely binds to mRNA tandem CAC trinucleotide or CA dinucleotide motifs. The sequence is that of RNA binding protein, mRNA processing factor 2 (Rbpms2) from Rattus norvegicus (Rat).